Consider the following 193-residue polypeptide: Peptidyl-tRNA hydrolase (193 aa).

A tRNA-binding site is contributed by Tyr15. Residue His20 is the Proton acceptor of the active site. Positions 65, 67, and 113 each coordinate tRNA.

It belongs to the PTH family. As to quaternary structure, monomer.

It is found in the cytoplasm. It carries out the reaction an N-acyl-L-alpha-aminoacyl-tRNA + H2O = an N-acyl-L-amino acid + a tRNA + H(+). Functionally, hydrolyzes ribosome-free peptidyl-tRNAs (with 1 or more amino acids incorporated), which drop off the ribosome during protein synthesis, or as a result of ribosome stalling. Its function is as follows. Catalyzes the release of premature peptidyl moieties from peptidyl-tRNA molecules trapped in stalled 50S ribosomal subunits, and thus maintains levels of free tRNAs and 50S ribosomes. In Ehrlichia ruminantium (strain Welgevonden), this protein is Peptidyl-tRNA hydrolase.